The following is a 560-amino-acid chain: S100P-binding protein (560 aa).

2 disordered regions span residues 259–292 (SDIPFDGDIDELLTLSPGDTTSSEEDKITSESTP) and 313–400 (SSSS…GKSF). The segment covering 313–352 (SSSSLQLPETSLASSTEPSPSLQLSASSVTAMNGQNNSNK) has biased composition (polar residues). A compositionally biased stretch (basic and acidic residues) spans 378-387 (QKVEPKKNKP).

The protein localises to the nucleus. This chain is S100P-binding protein (s100pbp), found in Xenopus laevis (African clawed frog).